Reading from the N-terminus, the 719-residue chain is Photosystem I P700 chlorophyll a apoprotein A1 (719 aa).

A run of 8 helical transmembrane segments spans residues 60-83 (IFSA…FHGA), 146-169 (LYCT…FHYH), 185-209 (LNHH…HVSL), 281-299 (TAHH…GHMY), 336-359 (WHAQ…HHMY), 375-401 (LSLF…IFMV), 423-445 (AIIS…LYIH), and 521-539 (FLVH…LILL). Positions 563 and 572 each coordinate [4Fe-4S] cluster. 2 helical membrane passes run 579 to 600 (HVFL…HFSW) and 654 to 676 (LSAY…MFLF). Position 665 (His665) interacts with chlorophyll a'. Met673 and Tyr681 together coordinate chlorophyll a. Residue Trp682 coordinates phylloquinone. Residues 714-719 (AVGVAH) traverse the membrane as a helical segment.

This sequence belongs to the PsaA/PsaB family. The PsaA/B heterodimer binds the P700 chlorophyll special pair and subsequent electron acceptors. PSI consists of a core antenna complex that captures photons, and an electron transfer chain that converts photonic excitation into a charge separation. The eukaryotic PSI reaction center is composed of at least 11 subunits. Requires P700 is a chlorophyll a/chlorophyll a' dimer, A0 is one or more chlorophyll a, A1 is one or both phylloquinones and FX is a shared 4Fe-4S iron-sulfur center. as cofactor.

It is found in the plastid. It localises to the chloroplast thylakoid membrane. It carries out the reaction reduced [plastocyanin] + hnu + oxidized [2Fe-2S]-[ferredoxin] = oxidized [plastocyanin] + reduced [2Fe-2S]-[ferredoxin]. In terms of biological role, psaA and PsaB bind P700, the primary electron donor of photosystem I (PSI), as well as the electron acceptors A0, A1 and FX. PSI is a plastocyanin-ferredoxin oxidoreductase, converting photonic excitation into a charge separation, which transfers an electron from the donor P700 chlorophyll pair to the spectroscopically characterized acceptors A0, A1, FX, FA and FB in turn. Oxidized P700 is reduced on the lumenal side of the thylakoid membrane by plastocyanin. This chain is Photosystem I P700 chlorophyll a apoprotein A1, found in Equisetum palustre (Marsh horsetail).